We begin with the raw amino-acid sequence, 369 residues long: Outer membrane protein P2 (369 aa).

Residues 1-20 (MKKTLAALIVGAFAASAANA) form the signal peptide.

The protein belongs to the Gram-negative porin family. Homotrimer.

It localises to the cell outer membrane. Its function is as follows. Forms pores that allow passive diffusion of small molecules across the outer membrane. This Haemophilus influenzae protein is Outer membrane protein P2 (ompP2).